Here is a 96-residue protein sequence, read N- to C-terminus: Large ribosomal subunit protein eL21 (96 aa).

It belongs to the eukaryotic ribosomal protein eL21 family.

This is Large ribosomal subunit protein eL21 from Methanoregula boonei (strain DSM 21154 / JCM 14090 / 6A8).